Consider the following 89-residue polypeptide: Small ribosomal subunit protein uS15 (89 aa).

The tract at residues 1 to 22 (MALEKEEKSQIINNYQLHETDT) is disordered. Over residues 10–22 (QIINNYQLHETDT) the composition is skewed to polar residues.

Belongs to the universal ribosomal protein uS15 family. In terms of assembly, part of the 30S ribosomal subunit. Forms a bridge to the 50S subunit in the 70S ribosome, contacting the 23S rRNA.

One of the primary rRNA binding proteins, it binds directly to 16S rRNA where it helps nucleate assembly of the platform of the 30S subunit by binding and bridging several RNA helices of the 16S rRNA. In terms of biological role, forms an intersubunit bridge (bridge B4) with the 23S rRNA of the 50S subunit in the ribosome. The sequence is that of Small ribosomal subunit protein uS15 from Chloroflexus aggregans (strain MD-66 / DSM 9485).